Consider the following 181-residue polypeptide: ATP-dependent protease subunit HslV (181 aa).

The active site involves threonine 7. Residues alanine 166, cysteine 169, and threonine 172 each coordinate Na(+).

Belongs to the peptidase T1B family. HslV subfamily. As to quaternary structure, a double ring-shaped homohexamer of HslV is capped on each side by a ring-shaped HslU homohexamer. The assembly of the HslU/HslV complex is dependent on binding of ATP.

The protein resides in the cytoplasm. The catalysed reaction is ATP-dependent cleavage of peptide bonds with broad specificity.. With respect to regulation, allosterically activated by HslU binding. In terms of biological role, protease subunit of a proteasome-like degradation complex believed to be a general protein degrading machinery. The chain is ATP-dependent protease subunit HslV from Anaeromyxobacter sp. (strain Fw109-5).